The sequence spans 261 residues: Ribonuclease HII (261 aa).

The RNase H type-2 domain occupies Lys-71 to Ser-259. 3 residues coordinate a divalent metal cation: Asp-77, Glu-78, and Asp-169.

It belongs to the RNase HII family. Mn(2+) is required as a cofactor. Mg(2+) serves as cofactor.

Its subcellular location is the cytoplasm. The catalysed reaction is Endonucleolytic cleavage to 5'-phosphomonoester.. Functionally, endonuclease that specifically degrades the RNA of RNA-DNA hybrids. This chain is Ribonuclease HII, found in Listeria monocytogenes serovar 1/2a (strain ATCC BAA-679 / EGD-e).